Reading from the N-terminus, the 241-residue chain is Uridylate kinase (241 aa).

15-18 lines the ATP pocket; that stretch reads KISG. The tract at residues 23–28 is involved in allosteric activation by GTP; it reads GDQGFG. Position 57 (G57) interacts with UMP. 2 residues coordinate ATP: G58 and R62. UMP is bound by residues D77 and 138-145; that span reads TGNPYFTT. Residues T165, Y171, and D174 each coordinate ATP.

It belongs to the UMP kinase family. As to quaternary structure, homohexamer.

It localises to the cytoplasm. It catalyses the reaction UMP + ATP = UDP + ADP. Its pathway is pyrimidine metabolism; CTP biosynthesis via de novo pathway; UDP from UMP (UMPK route): step 1/1. Allosterically activated by GTP. Inhibited by UTP. Functionally, catalyzes the reversible phosphorylation of UMP to UDP. The polypeptide is Uridylate kinase (Paracoccus zeaxanthinifaciens).